The following is a 124-amino-acid chain: UPF0292 protein AF_0905 (124 aa).

The 78-residue stretch at Gly21–Ile98 folds into the Toprim domain. Mg(2+)-binding residues include Glu27, Asp67, and Asp69.

This sequence belongs to the UPF0292 family. Requires Mg(2+) as cofactor.

The polypeptide is UPF0292 protein AF_0905 (Archaeoglobus fulgidus (strain ATCC 49558 / DSM 4304 / JCM 9628 / NBRC 100126 / VC-16)).